The sequence spans 279 residues: Pantothenate synthetase (279 aa).

27–34 (MGYLHEGH) provides a ligand contact to ATP. H34 acts as the Proton donor in catalysis. Q58 contacts (R)-pantoate. Q58 lines the beta-alanine pocket. 144–147 (GKKD) provides a ligand contact to ATP. Residue Q150 participates in (R)-pantoate binding. ATP is bound by residues V173 and 181–184 (MSSR).

This sequence belongs to the pantothenate synthetase family. In terms of assembly, homodimer.

Its subcellular location is the cytoplasm. It catalyses the reaction (R)-pantoate + beta-alanine + ATP = (R)-pantothenate + AMP + diphosphate + H(+). The protein operates within cofactor biosynthesis; (R)-pantothenate biosynthesis; (R)-pantothenate from (R)-pantoate and beta-alanine: step 1/1. Its function is as follows. Catalyzes the condensation of pantoate with beta-alanine in an ATP-dependent reaction via a pantoyl-adenylate intermediate. This is Pantothenate synthetase from Geobacter sp. (strain M21).